The chain runs to 627 residues: tRNA uridine 5-carboxymethylaminomethyl modification enzyme MnmG (627 aa).

FAD-binding positions include 13-18, Val125, and Ser180; that span reads GGGHAG. 274 to 288 is an NAD(+) binding site; sequence GPRYCPSIEDKVVRF. FAD is bound at residue Gln371.

Belongs to the MnmG family. Homodimer. Heterotetramer of two MnmE and two MnmG subunits. It depends on FAD as a cofactor.

The protein localises to the cytoplasm. Functionally, NAD-binding protein involved in the addition of a carboxymethylaminomethyl (cmnm) group at the wobble position (U34) of certain tRNAs, forming tRNA-cmnm(5)s(2)U34. In Francisella tularensis subsp. holarctica (strain FTNF002-00 / FTA), this protein is tRNA uridine 5-carboxymethylaminomethyl modification enzyme MnmG.